We begin with the raw amino-acid sequence, 1233 residues long: NACHT, LRR and PYD domains-containing protein 1b allele 1 (1233 aa).

A disordered region spans residues M1–D22. An NACHT domain is found at Q126–L435. G132–S139 serves as a coordination point for ATP. 2 LRR repeats span residues N627–C647 and S684–C704. The segment at F850–F983 is ZU5. Residues F850–Q1133 enclose the FIIND domain. The tract at residues S984–Q1133 is UPA. One can recognise a CARD domain in the interval H1143–S1226.

Belongs to the NLRP family. Interacts with DPP9; leading to inhibit activation of the inflammasome. DPP9 acts via formation of a ternary complex, composed of a DPP9 homodimer, one full-length Nlrp1b protein, and one cleaved C-terminus of Nlrp1b (NACHT, LRR and PYD domains-containing protein 1b, C-terminus). Interacts with DPP8; leading to inhibit activation of the inflammasome, probably via formation of a ternary complex with DPP8. Interacts (via LRR repeats) with BCL2 and BCL2L1 (via the loop between motifs BH4 and BH3). Interacts with NOD2; this interaction may increase IL1B release. Interacts with EIF2AK2/PKR; this interaction requires EIF2AK2 activity, is accompanied by EIF2AK2 autophosphorylation and promotes inflammasome assembly in response to B.anthracis lethal toxin. Interacts with MEFV; this interaction targets Nlrp1b to degradation by autophagy, hence preventing excessive IL1B- and IL18-mediated inflammation. As to quaternary structure, interacts with the C-terminal part of Nlrp1b (NACHT, LRR and PYD domains-containing protein 1b, C-terminus) in absence of pathogens and other damage-associated signals. In terms of assembly, interacts with the N-terminal part of Nlrp1b (NACHT, LRR and PYD domains-containing protein 1b, N-terminus) in absence of pathogens and other damage-associated signals. Homomultimer; forms the Nlrp1b inflammasome polymeric complex, a filament composed of homopolymers of this form in response to pathogens and other damage-associated signals. The Nlrp1b inflammasome polymeric complex directly recruits pro-caspase-1 (proCASP1) independently of PYCARD/ASC. Interacts (via CARD domain) with CASP1 (via CARD domain); leading to CASP1 activation. Autocatalytically cleaved. Autocatalytic cleavage in FIIND region occurs constitutively, prior to activation signals, and is required for inflammasome activity (IL1B release), possibly by facilitating CASP1 binding. Both N- and C-terminal parts remain associated non-covalently. Post-translationally, ubiquitinated by UBR2, a component of the N-end rule pathway in response to pathogens and other damage-associated signals, leading to its degradation by the proteasome and subsequent release of the cleaved C-terminal part of the protein (NACHT, LRR and PYD domains-containing protein 1b, C-terminus), which polymerizes and forms the Nlrp1b inflammasome. In terms of processing, (Microbial infection) Cleavage by B.anthracis lethal toxin (LT) endopeptidase promotes ubiquitination and degradation of the N-terminal part, releasing the cleaved C-terminal part of the protein (NACHT, LRR and PYD domains-containing protein 1b, C-terminus), which polymerizes and forms the Nlrp1b inflammasome. (Microbial infection) Ubiquitinated by S.flexneri IpaH7.8, leading to its degradation by the proteasome and subsequent release of the cleaved C-terminal part of the protein (NACHT, LRR and PYD domains-containing protein 1b, C-terminus), which polymerizes and forms the Nlrp1b inflammasome. As to expression, widely expressed, including in macrophages.

It localises to the cytoplasm. The protein localises to the cytosol. The protein resides in the membrane. It is found in the inflammasome. With respect to regulation, activated by cleavage by B.anthracis lethal toxin (LT) endopeptidase: cleavage by LT promotes ubiquitination and degradation of the N-terminal part, releasing the cleaved C-terminal part of the protein (NACHT, LRR and PYD domains-containing protein 1b, C-terminus), which polymerizes and forms the Nlrp1b inflammasome. Activated by S.flexneri IpaH7.8, an E3 ubiquitin ligase that mediates ubiquitination and degradation of the N-terminal part, releasing the cleaved C-terminal part of the protein, which polymerizes and forms the Nlrp1b inflammasome. Nlrp1b inflammasome is inhibited by DPP8 and DPP9, which sequester the C-terminal fragment of Nlrp1b (NACHT, LRR and PYD domains-containing protein 1b, C-terminus) in a ternary complex, thereby preventing Nlrp1b oligomerization and activation. Nlrp1b inflammasome is activated by Val-boroPro (Talabostat, PT-100), an inhibitor of dipeptidyl peptidases DPP8 and DPP9. Val-boroPro relieves inhibition of DPP8 and/or DPP9 by promoting disruption of the ternary complex, releasing its C-terminal part from autoinhibition. Activated by metabolic inhibitors, such as 2-deoxy-D-glucose and sodium azide, by nutrient deprivation and hypoxia, possibly due to a decrease in cytosolic ATP. Also activated by Toxoplasma gondii. Not activated by muramyl dipeptide, nor by full-length bacterial peptidoglycan. Contrary to its human ortholog, not activated by positive-strand RNA virus such as Semliki Forrest virus or long dsRNA. In terms of biological role, acts as the sensor component of the Nlrp1b inflammasome, which mediates inflammasome activation in response to various pathogen-associated signals, leading to subsequent pyroptosis. Inflammasomes are supramolecular complexes that assemble in the cytosol in response to pathogens and other damage-associated signals and play critical roles in innate immunity and inflammation. Acts as a recognition receptor (PRR): recognizes specific pathogens and other damage-associated signals, such as B.anthracis lethal toxin (LT) or Val-boroPro inhibitor, and mediates the formation of the inflammasome polymeric complex. In response to pathogen-associated signals, the N-terminal part of Nlrp1b is degraded by the proteasome, releasing the cleaved C-terminal part of the protein (NACHT, LRR and PYD domains-containing protein 1b, C-terminus), which polymerizes to initiate the formation of the inflammasome complex: the inflammasome directly recruits pro-caspase-1 (proCASP1) independently of PYCARD/ASC and promotes caspase-1 (CASP1) activation, which subsequently cleaves and activates inflammatory cytokines IL1B and IL18 and gasdermin-D (GSDMD), leading to pyroptosis. In the absence of GSDMD expression, the Nlrp1b inflammasome is able to recruit and activate CASP8, leading to activation of gasdermin-E (GSDME). Activation of Nlrp1b inflammasome is also required for HMGB1 secretion; the active cytokines and HMGB1 stimulate inflammatory responses. Primary mediator of macrophage susceptibility to B.anthracis LT: in response to B.anthracis infection, macrophages and dendritic cells release IL1B and undergo pyroptosis. This early inflammatory response to the toxin increases resistance to infection by B.anthracis spores. Constitutes the precursor of the Nlrp1b inflammasome, which mediates autoproteolytic processing within the FIIND domain to generate the N-terminal and C-terminal parts, which are associated non-covalently in absence of pathogens and other damage-associated signals. Its function is as follows. Regulatory part that prevents formation of the Nlrp1b inflammasome: in absence of pathogens and other damage-associated signals, interacts with the C-terminal part of Nlrp1b (NACHT, LRR and PYD domains-containing protein 1b, C-terminus), preventing activation of the Nlrp1b inflammasome. In response to pathogen-associated signals, this part is ubiquitinated by the N-end rule pathway and degraded by the proteasome, releasing the cleaved C-terminal part of the protein, which polymerizes and forms the Nlrp1b inflammasome. Functionally, constitutes the active part of the Nlrp1b inflammasome. In absence of pathogens and other damage-associated signals, interacts with the N-terminal part of Nlrp1b (NACHT, LRR and PYD domains-containing protein 1b, N-terminus), preventing activation of the Nlrp1b inflammasome. In response to pathogen-associated signals, the N-terminal part of Nlrp1b is degraded by the proteasome, releasing this form, which polymerizes to form the Nlrp1b inflammasome complex: the Nlrp1b inflammasome complex then directly recruits pro-caspase-1 (proCASP1) and promotes caspase-1 (CASP1) activation, leading to gasdermin-D (GSDMD) cleavage and subsequent pyroptosis. In Mus musculus (Mouse), this protein is NACHT, LRR and PYD domains-containing protein 1b allele 1.